The following is a 190-amino-acid chain: Early nodulin-like protein 12 (190 aa).

A signal peptide spans 1-21 (MGIIVPVLTLVFLLFAKVSHG). The Phytocyanin domain maps to 26–130 (RVILVGGSVG…GEKITLVVLA (105 aa)). Asn-44 is a glycosylation site (N-linked (GlcNAc...) asparagine). A disulfide bridge connects residues Cys-84 and Cys-118. Residues 135 to 164 (GGGSSSGDAPKVSPVSPTAQTPAPAPGPAA) are disordered. Positions 151–164 (PTAQTPAPAPGPAA) are enriched in low complexity. The GPI-anchor amidated asparagine moiety is linked to residue Asn-167. The propeptide at 168 to 190 (AAVGLKVASGWFLTAVVVGLAMA) is removed in mature form.

The protein belongs to the early nodulin-like (ENODL) family. In terms of tissue distribution, confined to flowers and siliques. Expressed in female gametophytes.

It is found in the cell membrane. Functionally, may act as a carbohydrate transporter. Required, together with ENODL11, ENODL12, ENODL13, ENODL14 and ENODL15, for male-female communication and pollen tube reception and burst at the synergid cell surface of the female gametophyte. The chain is Early nodulin-like protein 12 from Arabidopsis thaliana (Mouse-ear cress).